Consider the following 227-residue polypeptide: Cytochrome c oxidase subunit 2 (227 aa).

Residues methionine 1–serine 14 lie on the Mitochondrial intermembrane side of the membrane. The helical transmembrane segment at proline 15–methionine 45 threads the bilayer. The Mitochondrial matrix segment spans residues leucine 46–glutamine 59. The helical transmembrane segment at glutamate 60–methionine 87 threads the bilayer. Residues aspartate 88 to isoleucine 227 are Mitochondrial intermembrane-facing. The Cu cation site is built by histidine 161, cysteine 196, glutamate 198, cysteine 200, histidine 204, and methionine 207. Glutamate 198 contacts Mg(2+).

Belongs to the cytochrome c oxidase subunit 2 family. Component of the cytochrome c oxidase (complex IV, CIV), a multisubunit enzyme composed of 14 subunits. The complex is composed of a catalytic core of 3 subunits MT-CO1, MT-CO2 and MT-CO3, encoded in the mitochondrial DNA, and 11 supernumerary subunits COX4I, COX5A, COX5B, COX6A, COX6B, COX6C, COX7A, COX7B, COX7C, COX8 and NDUFA4, which are encoded in the nuclear genome. The complex exists as a monomer or a dimer and forms supercomplexes (SCs) in the inner mitochondrial membrane with NADH-ubiquinone oxidoreductase (complex I, CI) and ubiquinol-cytochrome c oxidoreductase (cytochrome b-c1 complex, complex III, CIII), resulting in different assemblies (supercomplex SCI(1)III(2)IV(1) and megacomplex MCI(2)III(2)IV(2)). Found in a complex with TMEM177, COA6, COX18, COX20, SCO1 and SCO2. Interacts with TMEM177 in a COX20-dependent manner. Interacts with COX20. Interacts with COX16. It depends on Cu cation as a cofactor.

The protein localises to the mitochondrion inner membrane. It catalyses the reaction 4 Fe(II)-[cytochrome c] + O2 + 8 H(+)(in) = 4 Fe(III)-[cytochrome c] + 2 H2O + 4 H(+)(out). Functionally, component of the cytochrome c oxidase, the last enzyme in the mitochondrial electron transport chain which drives oxidative phosphorylation. The respiratory chain contains 3 multisubunit complexes succinate dehydrogenase (complex II, CII), ubiquinol-cytochrome c oxidoreductase (cytochrome b-c1 complex, complex III, CIII) and cytochrome c oxidase (complex IV, CIV), that cooperate to transfer electrons derived from NADH and succinate to molecular oxygen, creating an electrochemical gradient over the inner membrane that drives transmembrane transport and the ATP synthase. Cytochrome c oxidase is the component of the respiratory chain that catalyzes the reduction of oxygen to water. Electrons originating from reduced cytochrome c in the intermembrane space (IMS) are transferred via the dinuclear copper A center (CU(A)) of subunit 2 and heme A of subunit 1 to the active site in subunit 1, a binuclear center (BNC) formed by heme A3 and copper B (CU(B)). The BNC reduces molecular oxygen to 2 water molecules using 4 electrons from cytochrome c in the IMS and 4 protons from the mitochondrial matrix. The chain is Cytochrome c oxidase subunit 2 (MT-CO2) from Apodemus semotus (Taiwan field mouse).